The sequence spans 338 residues: Protein RecA (338 aa).

68–75 (GPESSGKT) serves as a coordination point for ATP.

The protein belongs to the RecA family.

The protein resides in the cytoplasm. Can catalyze the hydrolysis of ATP in the presence of single-stranded DNA, the ATP-dependent uptake of single-stranded DNA by duplex DNA, and the ATP-dependent hybridization of homologous single-stranded DNAs. It interacts with LexA causing its activation and leading to its autocatalytic cleavage. The protein is Protein RecA of Citrifermentans bemidjiense (strain ATCC BAA-1014 / DSM 16622 / JCM 12645 / Bem) (Geobacter bemidjiensis).